The following is a 112-amino-acid chain: uncharacterized protein (112 aa).

A run of 3 helical transmembrane segments spans residues P33–A53, L58–T78, and C91–V111.

The protein localises to the membrane. This is an uncharacterized protein from Saccharomyces cerevisiae (strain ATCC 204508 / S288c) (Baker's yeast).